A 199-amino-acid chain; its full sequence is Ribonuclease HII (199 aa).

In terms of domain architecture, RNase H type-2 spans 10 to 199 (HLVAGVDEVG…VKRALGLASN (190 aa)). Positions 16, 17, and 108 each coordinate a divalent metal cation.

It belongs to the RNase HII family. It depends on Mn(2+) as a cofactor. The cofactor is Mg(2+).

It localises to the cytoplasm. It catalyses the reaction Endonucleolytic cleavage to 5'-phosphomonoester.. In terms of biological role, endonuclease that specifically degrades the RNA of RNA-DNA hybrids. This Klebsiella pneumoniae subsp. pneumoniae (strain ATCC 700721 / MGH 78578) protein is Ribonuclease HII.